A 483-amino-acid chain; its full sequence is Trehalose-6-phosphate synthase (483 aa).

Arg-22 is a binding site for D-glucose 6-phosphate. 42–43 (GG) provides a ligand contact to UDP-alpha-D-glucose. Tyr-94 and Asp-148 together coordinate D-glucose 6-phosphate. Residues Arg-290 and Lys-295 each coordinate UDP-alpha-D-glucose. Arg-328 contacts D-glucose 6-phosphate. 393 to 397 (LVAKE) is a binding site for UDP-alpha-D-glucose.

The protein belongs to the glycosyltransferase 20 family. As to quaternary structure, homotetramer.

The catalysed reaction is ADP-alpha-D-glucose + D-glucose 6-phosphate = alpha,alpha-trehalose 6-phosphate + ADP + H(+). The enzyme catalyses CDP-alpha-D-glucose + D-glucose 6-phosphate = alpha,alpha-trehalose 6-phosphate + CDP + H(+). It carries out the reaction GDP-alpha-D-glucose + D-glucose 6-phosphate = alpha,alpha-trehalose 6-phosphate + GDP + H(+). It catalyses the reaction TDP-alpha-D-glucose + D-glucose 6-phosphate = 5-methyl-UDP + alpha,alpha-trehalose 6-phosphate + H(+). The catalysed reaction is D-glucose 6-phosphate + UDP-alpha-D-glucose = alpha,alpha-trehalose 6-phosphate + UDP + H(+). Its pathway is glycan biosynthesis; trehalose biosynthesis. Functionally, probably involved in the osmoprotection via the biosynthesis of trehalose and in the production of glycogen and alpha-glucan via the TreS-Pep2 branch involved in the biosynthesis of maltose-1-phosphate (M1P). Catalyzes the transfer of glucose from UDP-glucose (UDP-Glc) to D-glucose 6-phosphate (Glc-6-P) to form trehalose-6-phosphate. Probably also able to use ADP-Glc, CDP-Glc, GDP-Glc and TDP-Glc as glucosyl donors. This chain is Trehalose-6-phosphate synthase, found in Mycobacterium sp. (strain JLS).